The sequence spans 307 residues: Aspartate carbamoyltransferase catalytic subunit (307 aa).

Positions 54 and 55 each coordinate carbamoyl phosphate. Lys-83 contributes to the L-aspartate binding site. The carbamoyl phosphate site is built by Arg-104, His-132, and Gln-135. 2 residues coordinate L-aspartate: Arg-165 and Arg-228. Carbamoyl phosphate contacts are provided by Leu-267 and Pro-268.

This sequence belongs to the aspartate/ornithine carbamoyltransferase superfamily. ATCase family. As to quaternary structure, heterododecamer (2C3:3R2) of six catalytic PyrB chains organized as two trimers (C3), and six regulatory PyrI chains organized as three dimers (R2).

It carries out the reaction carbamoyl phosphate + L-aspartate = N-carbamoyl-L-aspartate + phosphate + H(+). Its pathway is pyrimidine metabolism; UMP biosynthesis via de novo pathway; (S)-dihydroorotate from bicarbonate: step 2/3. Its function is as follows. Catalyzes the condensation of carbamoyl phosphate and aspartate to form carbamoyl aspartate and inorganic phosphate, the committed step in the de novo pyrimidine nucleotide biosynthesis pathway. The chain is Aspartate carbamoyltransferase catalytic subunit from Clostridium acetobutylicum (strain ATCC 824 / DSM 792 / JCM 1419 / IAM 19013 / LMG 5710 / NBRC 13948 / NRRL B-527 / VKM B-1787 / 2291 / W).